The chain runs to 417 residues: Prostaglandin E2 receptor EP3 subtype (417 aa).

The Extracellular portion of the chain corresponds to 1 to 52; it reads MKATRDHASAPFCTRFNHSDPGIWAAERAVEAPNNLTLPPEPSEDCGSVSVA. Residues Asn17 and Asn35 are each glycosylated (N-linked (GlcNAc...) asparagine). The chain crosses the membrane as a helical span at residues 53 to 77; it reads FSMTMMITGFVGNALAITLVSKSYR. Residues 78–90 are Cytoplasmic-facing; it reads RREGKRKKSFLLC. The chain crosses the membrane as a helical span at residues 91-111; the sequence is IGWLALTDMVGQLLTSPVVIV. Residues 112–130 are Extracellular-facing; the sequence is LYLSHQRWEQLDPSGRLCT. Residues 131 to 152 traverse the membrane as a helical segment; it reads FFGLTMTVFGLSSLFIASAMAV. Over 153 to 174 the chain is Cytoplasmic; it reads ERALATRAPHWYSSHMKTSVTR. Residues 175–196 traverse the membrane as a helical segment; sequence AVLLGVWLAVLAFALLPVLGVG. Residues 197 to 226 lie on the Extracellular side of the membrane; the sequence is QYTIQWPGTWCFISTGPGGNGTNSRQNWGN. N-linked (GlcNAc...) asparagine glycosylation is present at Asn216. The helical transmembrane segment at 227–252 threads the bilayer; it reads VFFASAFAILGLSALVVTFACNLATI. Residues 253–282 are Cytoplasmic-facing; the sequence is KALVSRCRAKATASQSSAQWGRITTETAIQ. A helical membrane pass occupies residues 283 to 306; sequence LMGIMCVLSVCWSPLLIMMLKMIF. An N-linked (GlcNAc...) asparagine glycan is attached at Asn307. Over 307-326 the chain is Extracellular; the sequence is NHTSVEHCKTYTENQDECNF. The helical transmembrane segment at 327–348 threads the bilayer; the sequence is FLIAVRLASLNQILDPWVYLLL. The Cytoplasmic segment spans residues 349 to 417; sequence RKILLQKFCQ…HIYLHTLEHQ (69 aa).

Belongs to the G-protein coupled receptor 1 family. In terms of assembly, interacts (via C-terminus) with MKLN1.

It localises to the cell membrane. In terms of biological role, receptor for prostaglandin E2 (PGE2). The various isoforms have identical ligand binding properties but interact with different second messenger systems: isoform EP3A couples to G(i)/G(o) proteins; isoform EP3B and isoform EP3C couple to G(s), and isoform EP3D couples to G(i), G(s) and G(p). Required for normal development of fever in response to pyrinogens, including IL1B, prostaglandin E2 and bacterial lipopolysaccharide (LPS). Required for normal potentiation of platelet aggregation by prostaglandin E2, and thus plays a role in the regulation of blood coagulation. Required for increased HCO3(-) secretion in the duodenum in response to mucosal acidification, and thereby contributes to the protection of the mucosa against acid-induced ulceration. Not required for normal kidney function, normal urine volume and osmolality. This is Prostaglandin E2 receptor EP3 subtype (PTGER3) from Bos taurus (Bovine).